The sequence spans 115 residues: MNLILMMILISSLISTILAIVAFWLPQMNPDMEKLSPYECGFDPLGSARLPFSMRFFLVAILFLLFDLEIALLLPLPWSTHLDPTLMLMWAFTIIILLTIGLIYEWLQGGLEWAE.

3 helical membrane passes run 3-23, 56-76, and 84-104; these read LILM…IVAF, FFLV…LLPL, and PTLM…GLIY.

This sequence belongs to the complex I subunit 3 family.

The protein resides in the mitochondrion membrane. The enzyme catalyses a ubiquinone + NADH + 5 H(+)(in) = a ubiquinol + NAD(+) + 4 H(+)(out). In terms of biological role, core subunit of the mitochondrial membrane respiratory chain NADH dehydrogenase (Complex I) that is believed to belong to the minimal assembly required for catalysis. Complex I functions in the transfer of electrons from NADH to the respiratory chain. The immediate electron acceptor for the enzyme is believed to be ubiquinone. The protein is NADH-ubiquinone oxidoreductase chain 3 (MT-ND3) of Polypterus ornatipinnis (Ornate bichir).